Here is a 295-residue protein sequence, read N- to C-terminus: 4-hydroxy-tetrahydrodipicolinate synthase (295 aa).

Thr-46 contacts pyruvate. The Proton donor/acceptor role is filled by Tyr-134. Lys-162 acts as the Schiff-base intermediate with substrate in catalysis. Residue Ile-205 coordinates pyruvate.

This sequence belongs to the DapA family. As to quaternary structure, homotetramer; dimer of dimers.

The protein localises to the cytoplasm. It catalyses the reaction L-aspartate 4-semialdehyde + pyruvate = (2S,4S)-4-hydroxy-2,3,4,5-tetrahydrodipicolinate + H2O + H(+). It functions in the pathway amino-acid biosynthesis; L-lysine biosynthesis via DAP pathway; (S)-tetrahydrodipicolinate from L-aspartate: step 3/4. Functionally, catalyzes the condensation of (S)-aspartate-beta-semialdehyde [(S)-ASA] and pyruvate to 4-hydroxy-tetrahydrodipicolinate (HTPA). The protein is 4-hydroxy-tetrahydrodipicolinate synthase of Anaeromyxobacter sp. (strain K).